Here is a 230-residue protein sequence, read N- to C-terminus: uncharacterized protein (230 aa).

Helical transmembrane passes span 8–28 (SLILTALIGGIPSSTAVTMAF), 45–65 (SIILSWLVMFFRVIFYTFIIF), 72–92 (LVLLLLPYFALLLMFAIFLYL), 109–129 (PFSLSQAFTFGLIYSTISVIS), 141–161 (IYVLSFLSGIMDIDAITLLLA), 176–196 (MGILLAVMSNNLFKSGYAIIF), and 203–223 (IYFLFVALFTLIYTTTLLILF).

This sequence to P.aeruginosa PA0043 and M.thermoautotrophicum MTH1451.

Its subcellular location is the cell membrane. This is an uncharacterized protein from Aquifex aeolicus (strain VF5).